The primary structure comprises 626 residues: Phosphomethylpyrimidine synthase (626 aa).

Residues 1–22 (MTKQEKAINLSESAQVDQQSVQ) form a disordered region. The span at 10–22 (LSESAQVDQQSVQ) shows a compositional bias: polar residues. Substrate-binding positions include N232, M261, Y290, H326, 346–348 (SRG), 387–390 (DGLR), and E426. Residue H430 participates in Zn(2+) binding. Y453 contributes to the substrate binding site. Residue H494 coordinates Zn(2+). The [4Fe-4S] cluster site is built by C574, C577, and C582.

This sequence belongs to the ThiC family. As to quaternary structure, homodimer. [4Fe-4S] cluster serves as cofactor.

The catalysed reaction is 5-amino-1-(5-phospho-beta-D-ribosyl)imidazole + S-adenosyl-L-methionine = 4-amino-2-methyl-5-(phosphooxymethyl)pyrimidine + CO + 5'-deoxyadenosine + formate + L-methionine + 3 H(+). Its pathway is cofactor biosynthesis; thiamine diphosphate biosynthesis. Functionally, catalyzes the synthesis of the hydroxymethylpyrimidine phosphate (HMP-P) moiety of thiamine from aminoimidazole ribotide (AIR) in a radical S-adenosyl-L-methionine (SAM)-dependent reaction. In Pseudomonas putida (strain GB-1), this protein is Phosphomethylpyrimidine synthase.